The primary structure comprises 500 residues: Cytochrome P450 2D15 (500 aa).

Cysteine 446 is a binding site for heme.

This sequence belongs to the cytochrome P450 family. It depends on heme as a cofactor. In terms of tissue distribution, liver. Also detected in several other tissues.

It is found in the endoplasmic reticulum membrane. Its subcellular location is the microsome membrane. The catalysed reaction is an organic molecule + reduced [NADPH--hemoprotein reductase] + O2 = an alcohol + oxidized [NADPH--hemoprotein reductase] + H2O + H(+). High activity for the hydroxylation of bunitrolol and imipramine; low activity on debrisoquine. The chain is Cytochrome P450 2D15 (CYP2D15) from Canis lupus familiaris (Dog).